A 255-amino-acid chain; its full sequence is Syntaxin-23 (255 aa).

The segment at 1 to 31 (MSFQDLEAGRGRSLASSRNINGGGSRQDTTQ) is disordered. S2 is modified (N-acetylserine). The span at 14–31 (LASSRNINGGGSRQDTTQ) shows a compositional bias: polar residues. In terms of domain architecture, t-SNARE coiled-coil homology spans 184 to 246 (EAVIEEREQG…AQGKSHLVRH (63 aa)).

Belongs to the syntaxin family. In terms of assembly, part of the t-SNARE complex. Interacts with RGS1. As to expression, expressed at higher levels in leaves, flowers and stems than in roots.

The protein resides in the membrane. Its function is as follows. May function in the docking or fusion of transport vesicles with the prevacuolar membrane. The polypeptide is Syntaxin-23 (SYP23) (Arabidopsis thaliana (Mouse-ear cress)).